We begin with the raw amino-acid sequence, 58 residues long: MKIHKCSFCGAEIPPGYGIMYVRNDGTIQRYCSRKCFVSATKYGRNPRKLAWVRKRQK.

Cys-6, Cys-9, Cys-32, and Cys-36 together coordinate Zn(2+). The C4-type zinc-finger motif lies at 6-36 (CSFCGAEIPPGYGIMYVRNDGTIQRYCSRKC).

The protein belongs to the eukaryotic ribosomal protein eL24 family. Part of the 50S ribosomal subunit. Forms a cluster with proteins L3 and L14. Zn(2+) serves as cofactor.

Binds to the 23S rRNA. This Pyrobaculum neutrophilum (strain DSM 2338 / JCM 9278 / NBRC 100436 / V24Sta) (Thermoproteus neutrophilus) protein is Large ribosomal subunit protein eL24.